We begin with the raw amino-acid sequence, 120 residues long: Large ribosomal subunit protein bL20 (120 aa).

The protein belongs to the bacterial ribosomal protein bL20 family.

Functionally, binds directly to 23S ribosomal RNA and is necessary for the in vitro assembly process of the 50S ribosomal subunit. It is not involved in the protein synthesizing functions of that subunit. The polypeptide is Large ribosomal subunit protein bL20 (Novosphingobium aromaticivorans (strain ATCC 700278 / DSM 12444 / CCUG 56034 / CIP 105152 / NBRC 16084 / F199)).